The sequence spans 290 residues: Phosphatidylserine decarboxylase proenzyme (290 aa).

Active-site charge relay system; for autoendoproteolytic cleavage activity residues include Asp-96, His-153, and Ser-257. Ser-257 (schiff-base intermediate with substrate; via pyruvic acid; for decarboxylase activity) is an active-site residue. A Pyruvic acid (Ser); by autocatalysis modification is found at Ser-257.

The protein belongs to the phosphatidylserine decarboxylase family. PSD-B subfamily. Prokaryotic type I sub-subfamily. As to quaternary structure, heterodimer of a large membrane-associated beta subunit and a small pyruvoyl-containing alpha subunit. Pyruvate serves as cofactor. In terms of processing, is synthesized initially as an inactive proenzyme. Formation of the active enzyme involves a self-maturation process in which the active site pyruvoyl group is generated from an internal serine residue via an autocatalytic post-translational modification. Two non-identical subunits are generated from the proenzyme in this reaction, and the pyruvate is formed at the N-terminus of the alpha chain, which is derived from the carboxyl end of the proenzyme. The autoendoproteolytic cleavage occurs by a canonical serine protease mechanism, in which the side chain hydroxyl group of the serine supplies its oxygen atom to form the C-terminus of the beta chain, while the remainder of the serine residue undergoes an oxidative deamination to produce ammonia and the pyruvoyl prosthetic group on the alpha chain. During this reaction, the Ser that is part of the protease active site of the proenzyme becomes the pyruvoyl prosthetic group, which constitutes an essential element of the active site of the mature decarboxylase.

It is found in the cell membrane. The enzyme catalyses a 1,2-diacyl-sn-glycero-3-phospho-L-serine + H(+) = a 1,2-diacyl-sn-glycero-3-phosphoethanolamine + CO2. It functions in the pathway phospholipid metabolism; phosphatidylethanolamine biosynthesis; phosphatidylethanolamine from CDP-diacylglycerol: step 2/2. In terms of biological role, catalyzes the formation of phosphatidylethanolamine (PtdEtn) from phosphatidylserine (PtdSer). This is Phosphatidylserine decarboxylase proenzyme from Haemophilus influenzae (strain ATCC 51907 / DSM 11121 / KW20 / Rd).